The chain runs to 335 residues: Lipase chaperone (335 aa).

A helical transmembrane segment spans residues 7–23 (LLPLAIALGLGFFIARP).

Belongs to the lipase chaperone family.

It is found in the cell inner membrane. Functionally, may be involved in the folding of the extracellular lipase during its passage through the periplasm. The sequence is that of Lipase chaperone (lifO) from Ectopseudomonas mendocina (Pseudomonas mendocina).